The following is a 175-amino-acid chain: NADH dehydrogenase [ubiquinone] iron-sulfur protein 4, mitochondrial (175 aa).

A mitochondrion-targeting transit peptide spans 1 to 42; it reads MAAVSMSVALRQALWGRRVATVAAVSVSKVSTRSLSTSTWRL. Positions 149–175 are disordered; sequence ERKVPKPKSKSYGANFSWNKRTRVSTK. Ser-173 is subject to Phosphoserine.

This sequence belongs to the complex I NDUFS4 subunit family. As to quaternary structure, mammalian complex I is composed of 45 different subunits. This is a component of the iron-sulfur (IP) fragment of the enzyme. Interacts with BCAP31 and TOMM40; the interaction mediates its translocation to the mitochondria; the interaction with BCAP31 is direct. In terms of processing, phosphorylated.

It is found in the mitochondrion inner membrane. In terms of biological role, accessory subunit of the mitochondrial membrane respiratory chain NADH dehydrogenase (Complex I), that is believed not to be involved in catalysis. Complex I functions in the transfer of electrons from NADH to the respiratory chain. The immediate electron acceptor for the enzyme is believed to be ubiquinone. The protein is NADH dehydrogenase [ubiquinone] iron-sulfur protein 4, mitochondrial (NDUFS4) of Bos taurus (Bovine).